A 319-amino-acid polypeptide reads, in one-letter code: Tetrahydromethanopterin S-methyltransferase subunit H (319 aa).

The protein belongs to the MtrH family. In terms of assembly, the complex is composed of 8 subunits; MtrA, MtrB, MtrC, MtrD, MtrE, MtrF, MtrG and MtrH.

The enzyme catalyses 5-methyl-5,6,7,8-tetrahydromethanopterin + coenzyme M + 2 Na(+)(in) = 5,6,7,8-tetrahydromethanopterin + methyl-coenzyme M + 2 Na(+)(out). The protein operates within one-carbon metabolism; methanogenesis from CO(2); methyl-coenzyme M from 5,10-methylene-5,6,7,8-tetrahydromethanopterin: step 2/2. Its function is as follows. Part of a complex that catalyzes the formation of methyl-coenzyme M and tetrahydromethanopterin from coenzyme M and methyl-tetrahydromethanopterin. This is an energy-conserving, sodium-ion translocating step. MtrH catalyzes the transfer of the methyl group from methyl-tetrahydromethanopterin to the corrinoid prosthetic group of MtrA. The sequence is that of Tetrahydromethanopterin S-methyltransferase subunit H from Methanococcus maripaludis (strain C5 / ATCC BAA-1333).